Consider the following 379-residue polypeptide: Cytochrome b (379 aa).

The next 4 helical transmembrane spans lie at 33 to 53 (FGSL…FLAM), 77 to 98 (WLIR…FIHV), 113 to 133 (WNIG…GYVL), and 178 to 198 (FFAF…VHLL). Residues His83 and His97 each coordinate heme b. The heme b site is built by His182 and His196. His201 contacts a ubiquinone. The next 4 helical transmembrane spans lie at 226–246 (TKDL…ALFF), 288–308 (LGGV…PLLN), 320–340 (VTQV…WIGG), and 347–367 (FTTI…ILIP).

It belongs to the cytochrome b family. As to quaternary structure, the cytochrome bc1 complex contains 11 subunits: 3 respiratory subunits (MT-CYB, CYC1 and UQCRFS1), 2 core proteins (UQCRC1 and UQCRC2) and 6 low-molecular weight proteins (UQCRH/QCR6, UQCRB/QCR7, UQCRQ/QCR8, UQCR10/QCR9, UQCR11/QCR10 and a cleavage product of UQCRFS1). This cytochrome bc1 complex then forms a dimer. Requires heme b as cofactor.

It localises to the mitochondrion inner membrane. In terms of biological role, component of the ubiquinol-cytochrome c reductase complex (complex III or cytochrome b-c1 complex) that is part of the mitochondrial respiratory chain. The b-c1 complex mediates electron transfer from ubiquinol to cytochrome c. Contributes to the generation of a proton gradient across the mitochondrial membrane that is then used for ATP synthesis. This chain is Cytochrome b (MT-CYB), found in Akodon mystax (Caparao grass mouse).